A 235-amino-acid polypeptide reads, in one-letter code: Ion-translocating oxidoreductase complex subunit E (235 aa).

5 helical membrane passes run 63–83, 93–113, 117–137, 152–172, and 206–226; these read LGLG…ISLF, IPIY…LMNA, TLYQ…IIIG, IWDG…LGAL, and SFLL…LLAI.

It belongs to the NqrDE/RnfAE family. The complex is composed of six subunits: RnfA, RnfB, RnfC, RnfD, RnfE and RnfG.

It is found in the cell inner membrane. In terms of biological role, part of a membrane-bound complex that couples electron transfer with translocation of ions across the membrane. The sequence is that of Ion-translocating oxidoreductase complex subunit E from Haemophilus influenzae (strain 86-028NP).